A 201-amino-acid polypeptide reads, in one-letter code: Small ribosomal subunit protein uS4c (201 aa).

The tract at residues 15–44 is disordered; that stretch reads LGALPGLTSKRPRSGSDLRNQSRSGKKSQY. Residues 89–150 form the S4 RNA-binding domain; that stretch reads MRLDNILFRL…EQRSRALIQN (62 aa).

This sequence belongs to the universal ribosomal protein uS4 family. In terms of assembly, part of the 30S ribosomal subunit. Contacts protein S5. The interaction surface between S4 and S5 is involved in control of translational fidelity.

The protein localises to the plastid. The protein resides in the chloroplast. Functionally, one of the primary rRNA binding proteins, it binds directly to 16S rRNA where it nucleates assembly of the body of the 30S subunit. Its function is as follows. With S5 and S12 plays an important role in translational accuracy. In Calycanthus floridus var. glaucus (Eastern sweetshrub), this protein is Small ribosomal subunit protein uS4c (rps4).